A 209-amino-acid polypeptide reads, in one-letter code: uncharacterized protein (209 aa).

The span at 1–11 (MMRTNAGKETK) shows a compositional bias: basic and acidic residues. The disordered stretch occupies residues 1 to 20 (MMRTNAGKETKGYNPAPADS).

This is an uncharacterized protein from Caenorhabditis elegans.